Reading from the N-terminus, the 185-residue chain is Flavodoxin (185 aa).

In terms of domain architecture, Flavodoxin-like spans 4 to 159; the sequence is VLVIYDTRTG…ACRRLGRRLA (156 aa).

Belongs to the flavodoxin family. It depends on FMN as a cofactor.

In terms of biological role, low-potential electron donor to a number of redox enzymes. The chain is Flavodoxin (fldA) from Aquifex aeolicus (strain VF5).